We begin with the raw amino-acid sequence, 130 residues long: Small ribosomal subunit protein uS8 (130 aa).

Belongs to the universal ribosomal protein uS8 family. Part of the 30S ribosomal subunit. Contacts proteins S5 and S12.

One of the primary rRNA binding proteins, it binds directly to 16S rRNA central domain where it helps coordinate assembly of the platform of the 30S subunit. This Buchnera aphidicola subsp. Schizaphis graminum (strain Sg) protein is Small ribosomal subunit protein uS8.